The primary structure comprises 474 residues: Coronin-1C (474 aa).

5 WD repeats span residues 78–118, 128–168, 172–202, 215–249, and 263–303; these read GHTG…LTLS, GHSK…ALIN, MHSDMIYNVSWSRNGSLICTASKDKKVRVID, AHEGARPMRAIFLADGNVFTTGFSRMSERQLALWN, and DTSN…PYVH. A coiled-coil region spans residues 435-474; the sequence is VQNEAKLDEILKEIKSIKETICSQDERISKLEQQLAKMAA. Lysine 446 carries the N6-acetyllysine modification.

This sequence belongs to the WD repeat coronin family. In terms of assembly, homotrimer. Binds F-actin. Interacts with RCC2. Interacts preferentially with nucleotide-free and GDP-bound RAC1. Interacts with VIM (via head domain). Interacts with MICAL2; this interaction recruits MICAL2 to the actin filaments. Detected in skeletal muscle (at protein level). Detected in fibroblasts (at protein level). Ubiquitous.

It localises to the cell membrane. Its subcellular location is the cell projection. The protein localises to the lamellipodium. It is found in the ruffle membrane. The protein resides in the cytoplasm. It localises to the cytoskeleton. Its subcellular location is the cell cortex. The protein localises to the endosome membrane. Its function is as follows. Plays a role in directed cell migration by regulating the activation and subcellular location of RAC1. Increases the presence of activated RAC1 at the leading edge of migrating cells. Required for normal organization of the cytoskeleton, including the actin cytoskeleton, microtubules and the vimentin intermediate filaments. Required for normal cell proliferation, cell migration, and normal formation of lamellipodia. Plays a role in endoplasmic reticulum-associated endosome fission: localizes to endosome membrane tubules and promotes recruitment of TMCC1, leading to recruitment of the endoplasmic reticulum to endosome tubules for fission. Endosome membrane fission of early and late endosomes is essential to separate regions destined for lysosomal degradation from carriers to be recycled to the plasma membrane. Required for normal distribution of mitochondria within cells. In Mus musculus (Mouse), this protein is Coronin-1C (Coro1c).